The chain runs to 434 residues: Galactofuranosyl glycosyltransferase (434 aa).

At 1-18 the chain is on the cytoplasmic side; it reads MAPPRWHHDRRRMAIFVR. A helical; Signal-anchor for type II membrane protein membrane pass occupies residues 19 to 38; it reads VGLYTLLFLMGYVVPLIIFY. 4 N-linked (GlcNAc...) asparagine glycosylation sites follow: asparagine 39, asparagine 100, asparagine 162, and asparagine 388. The Lumenal segment spans residues 39-434; it reads NRSRADTFED…KLLDFPVDPS (396 aa).

It belongs to the glycosyltransferase 2 family.

Its subcellular location is the endoplasmic reticulum membrane. It functions in the pathway glycolipid biosynthesis; glycosylphosphatidylinositol-anchor biosynthesis. Glycosyltransferase that may be responsible for the addition of galactofuranosyl residues to the nascent lipophosphoglycan (LPG) chain. It could alternatively be involved in the synthesis of the galactofuranosyl donor. The sequence is that of Galactofuranosyl glycosyltransferase (LPG1) from Leishmania donovani.